A 432-amino-acid chain; its full sequence is ATP-dependent RNA helicase RhlB (432 aa).

A Q motif motif is present at residues 9–37 (QNFADLGLQPQVIDGLNAKGFIKCTPIQA). Residues 40 to 219 (LPVLLAGQDI…FEHMQEPEHV (180 aa)) form the Helicase ATP-binding domain. 53 to 60 (AQTGTGKT) lines the ATP pocket. The DEAD box signature appears at 165–168 (DEAD). Positions 245–390 (ALLQTLIEEE…QSDYDASALL (146 aa)) constitute a Helicase C-terminal domain. Residues 396–432 (PLRLQRRPQQNRRNNNGQRQGGNRKHTRPRQPRNTQS) are disordered. Residues 417 to 426 (GNRKHTRPRQ) are compositionally biased toward basic residues.

This sequence belongs to the DEAD box helicase family. RhlB subfamily. As to quaternary structure, component of the RNA degradosome, which is a multiprotein complex involved in RNA processing and mRNA degradation.

It localises to the cytoplasm. The catalysed reaction is ATP + H2O = ADP + phosphate + H(+). Its function is as follows. DEAD-box RNA helicase involved in RNA degradation. Has RNA-dependent ATPase activity and unwinds double-stranded RNA. This is ATP-dependent RNA helicase RhlB from Aliivibrio fischeri (strain ATCC 700601 / ES114) (Vibrio fischeri).